The sequence spans 374 residues: Flagellar P-ring protein 1 (374 aa).

The signal sequence occupies residues 1 to 29; sequence MPGVRWVRIVGVACAALSALALSVTSASA.

The protein belongs to the FlgI family. As to quaternary structure, the basal body constitutes a major portion of the flagellar organelle and consists of four rings (L,P,S, and M) mounted on a central rod.

The protein resides in the periplasm. The protein localises to the bacterial flagellum basal body. Its function is as follows. Assembles around the rod to form the L-ring and probably protects the motor/basal body from shearing forces during rotation. This Bradyrhizobium diazoefficiens (strain JCM 10833 / BCRC 13528 / IAM 13628 / NBRC 14792 / USDA 110) protein is Flagellar P-ring protein 1.